The primary structure comprises 920 residues: Sensor histidine kinase SsrA (920 aa).

The Cytoplasmic segment spans residues 1–19 (MNLLNLKNTLQTSLVIRLT). Residues 20 to 40 (FLFLLTTIIIWLLSVLTAAYI) traverse the membrane as a helical segment. At 41 to 291 (SMVQKRQHII…YGNLHNRILK (251 aa)) the chain is on the periplasmic side. A helical membrane pass occupies residues 292–312 (IILQQIPFTLTALVLMTSAFC). Topologically, residues 313-920 (WLLHRSLAKP…RMIFKNYTIT (608 aa)) are cytoplasmic. The HAMP domain maps to 317–369 (RSLAKPLWRFVDVINKTATAPLSTRLPAQRLDELDSIAGAFNQLLDTLQVQYD). Residues 354-395 (AGAFNQLLDTLQVQYDNLENKVAERTQALNEAKKRAERANKR) are a coiled coil. Positions 402 to 614 (VISHELRTPM…CVSLVLPLQE (213 aa)) constitute a Histidine kinase domain. Residues histidine 405 and aspartate 549 each contribute to the ATP site. Histidine 405 carries the post-translational modification Phosphohistidine; by autocatalysis. In terms of domain architecture, Response regulatory spans 690 to 808 (QILLVDDADI…TLARYISIAA (119 aa)). Aspartate 739 is subject to 4-aspartylphosphate.

Post-translationally, autophosphorylated.

Its subcellular location is the cell inner membrane. The catalysed reaction is ATP + protein L-histidine = ADP + protein N-phospho-L-histidine.. Functionally, member of the two-component regulatory system SsrA/SsrB (SpiR/SsrB) that is required for intracellular proliferation and systemic dissemination within the host. When inside acidic Salmonella-containing vesicles (SCV) within host cells the SsrA sensor kinase autophosphorylates and the phosphoryl group is transferred to the response regulator SsrB; phosphorylated SsrB activates the expression of genes encoding virulence proteins, including pathogenicity island 2 (SPI2) and other horizontally acquired genes, and antagonizes the action of transcriptional repressor hns (H-NS). The sequence is that of Sensor histidine kinase SsrA from Salmonella typhimurium (strain LT2 / SGSC1412 / ATCC 700720).